A 329-amino-acid polypeptide reads, in one-letter code: GTP 3',8-cyclase (329 aa).

Residues Ala8–Ala234 form the Radical SAM core domain. Arg17 contacts GTP. Residues Cys24 and Cys28 each contribute to the [4Fe-4S] cluster site. Residue Tyr30 coordinates S-adenosyl-L-methionine. Residue Cys31 coordinates [4Fe-4S] cluster. Arg68 contacts GTP. Gly72 contributes to the S-adenosyl-L-methionine binding site. GTP is bound at residue Thr99. Ser123 is a binding site for S-adenosyl-L-methionine. Lys160 lines the GTP pocket. Met194 contributes to the S-adenosyl-L-methionine binding site. Cys257 and Cys260 together coordinate [4Fe-4S] cluster. A GTP-binding site is contributed by Arg262 to Arg264. Cys274 lines the [4Fe-4S] cluster pocket.

The protein belongs to the radical SAM superfamily. MoaA family. As to quaternary structure, monomer and homodimer. The cofactor is [4Fe-4S] cluster.

The enzyme catalyses GTP + AH2 + S-adenosyl-L-methionine = (8S)-3',8-cyclo-7,8-dihydroguanosine 5'-triphosphate + 5'-deoxyadenosine + L-methionine + A + H(+). It participates in cofactor biosynthesis; molybdopterin biosynthesis. Catalyzes the cyclization of GTP to (8S)-3',8-cyclo-7,8-dihydroguanosine 5'-triphosphate. This is GTP 3',8-cyclase from Escherichia coli (strain K12 / MC4100 / BW2952).